Here is a 612-residue protein sequence, read N- to C-terminus: Sulfite reductase [NADPH] flavoprotein alpha-component (612 aa).

Residues V64 to V202 enclose the Flavodoxin-like domain. FMN is bound by residues S70–A75, S117–G120, and L153–C162. Residues T247 to P461 form the FAD-binding FR-type domain. FAD contacts are provided by residues T335, K369, R399–S402, T417–G419, Y423, and G432–S435. Residues S532–R533, K538–Q542, and D574 each bind NADP(+). An FAD-binding site is contributed by Y612.

It belongs to the NADPH-dependent sulphite reductase flavoprotein subunit CysJ family. This sequence in the N-terminal section; belongs to the flavodoxin family. The protein in the C-terminal section; belongs to the flavoprotein pyridine nucleotide cytochrome reductase family. Alpha(8)-beta(8). The alpha component is a flavoprotein, the beta component is a hemoprotein. It depends on FAD as a cofactor. Requires FMN as cofactor.

It catalyses the reaction hydrogen sulfide + 3 NADP(+) + 3 H2O = sulfite + 3 NADPH + 4 H(+). The protein operates within sulfur metabolism; hydrogen sulfide biosynthesis; hydrogen sulfide from sulfite (NADPH route): step 1/1. Functionally, component of the sulfite reductase complex that catalyzes the 6-electron reduction of sulfite to sulfide. This is one of several activities required for the biosynthesis of L-cysteine from sulfate. The flavoprotein component catalyzes the electron flow from NADPH -&gt; FAD -&gt; FMN to the hemoprotein component. In Yersinia pestis bv. Antiqua (strain Nepal516), this protein is Sulfite reductase [NADPH] flavoprotein alpha-component.